Here is a 278-residue protein sequence, read N- to C-terminus: MNLTLGALNPIAFNLGGIQVHWYGIIIASAVVLATILAVQEAKRRRIDPDSIYDLILWALPVAIITARMYYVIFEWGYYQNHVDEIVRVWDGGIAIYGALIGAGIVVYLFCRANWIPVWLMLDIIAPVLIMAQGIGRWGNFMNQEAFGRITSLTFLQSLHLPHFIIQQMLIDGAYRQPTFLYESLWDILGFIVLMSLRHKKHLFKQGEVFLSYVIWYAFGRFFVEGMRTDSLMLLGIRVSQWLSVILFIGAIGILVFRRKSMRERLPDYLEGNQLSPK.

4 helical membrane passes run 18–38 (IQVH…TILA), 55–75 (LILW…VIFE), 90–110 (WDGG…VYLF), and 115–135 (WIPV…AQGI). Arg137 serves as a coordination point for a 1,2-diacyl-sn-glycero-3-phospho-(1'-sn-glycerol). 3 helical membrane-spanning segments follow: residues 177-197 (QPTF…LMSL), 207-227 (GEVF…VEGM), and 237-257 (IRVS…ILVF).

It belongs to the Lgt family.

It is found in the cell membrane. The catalysed reaction is L-cysteinyl-[prolipoprotein] + a 1,2-diacyl-sn-glycero-3-phospho-(1'-sn-glycerol) = an S-1,2-diacyl-sn-glyceryl-L-cysteinyl-[prolipoprotein] + sn-glycerol 1-phosphate + H(+). Its pathway is protein modification; lipoprotein biosynthesis (diacylglyceryl transfer). Catalyzes the transfer of the diacylglyceryl group from phosphatidylglycerol to the sulfhydryl group of the N-terminal cysteine of a prolipoprotein, the first step in the formation of mature lipoproteins. The polypeptide is Phosphatidylglycerol--prolipoprotein diacylglyceryl transferase (Pediococcus pentosaceus (strain ATCC 25745 / CCUG 21536 / LMG 10740 / 183-1w)).